We begin with the raw amino-acid sequence, 560 residues long: Glucose-6-phosphate isomerase, cytosolic (560 aa).

Residue Ala2 is modified to N-acetylalanine. Residue Glu361 is the Proton donor of the active site. Residues His392 and Lys517 contribute to the active site.

The protein belongs to the GPI family. Homodimer.

It localises to the cytoplasm. The enzyme catalyses alpha-D-glucose 6-phosphate = beta-D-fructose 6-phosphate. It functions in the pathway carbohydrate degradation; glycolysis; D-glyceraldehyde 3-phosphate and glycerone phosphate from D-glucose: step 2/4. Its activity is regulated as follows. Inhibited by glycerol-3-P (G3P). The protein is Glucose-6-phosphate isomerase, cytosolic (PGIC) of Arabidopsis thaliana (Mouse-ear cress).